A 416-amino-acid chain; its full sequence is Tryptophan synthase beta chain (416 aa).

An N6-(pyridoxal phosphate)lysine modification is found at Lys109.

Belongs to the TrpB family. In terms of assembly, tetramer of two alpha and two beta chains. Pyridoxal 5'-phosphate is required as a cofactor.

It catalyses the reaction (1S,2R)-1-C-(indol-3-yl)glycerol 3-phosphate + L-serine = D-glyceraldehyde 3-phosphate + L-tryptophan + H2O. Its pathway is amino-acid biosynthesis; L-tryptophan biosynthesis; L-tryptophan from chorismate: step 5/5. Functionally, the beta subunit is responsible for the synthesis of L-tryptophan from indole and L-serine. The chain is Tryptophan synthase beta chain from Mesorhizobium japonicum (strain LMG 29417 / CECT 9101 / MAFF 303099) (Mesorhizobium loti (strain MAFF 303099)).